Reading from the N-terminus, the 375-residue chain is Protein SSUH2 homolog (375 aa).

In terms of tissue distribution, expressed in enterocytes of small and large intestinal mucosa (at protein level). Expressed in chromaffine and interstitial cells. Expressed in peripheral blood and gingival cells.

Its subcellular location is the cytoplasm. The protein localises to the nucleus. Its function is as follows. Plays a role in odontogenesis. This chain is Protein SSUH2 homolog, found in Homo sapiens (Human).